The chain runs to 614 residues: MSSYSSDRDRGRDRGFGAPRFGGSRTGPLSGKKFGNPGEKLVKKKWNLDELPKFEKNFYQEHPDLARRTAQEVDTYRRSKEITVRGHNCPKPVLNFYEANFPANVMDVIARQNFTEPTAIQAQGWPVALSGLDMVGVAQTGSGKTLSYLLPAIVHINHQPFLERGDGPICLVLAPTRELAQQVQQVAAEYCRACRLKSTCIYGGAPKGPQIRDLERGVEICIATPGRLIDFLECGKTNLRRTTYLVLDEADRMLDMGFEPQIRKIVDQIRPDRQTLMWSATWPKEVRQLAEDFLKDYIHINIGALELSANHNILQIVDVCHDVEKDEKLIRLMEEIMSEKENKTIVFVETKRRCDELTRKMRRDGWPAMGIHGDKSQQERDWVLNEFKHGKAPILIATDVASRGLDVEDVKFVINYDYPNSSEDYIHRIGRTARSTKTGTAYTFFTPNNIKQVSDLISVLREANQAINPKLLQLVEDRGSGRSRGRGGMKDDRRDRYSAGKRGGFNTFRDRENYDRGYSNLLKRDFGAKTQNGVYSAANYTNGSFGSNFVSAGIQTSFRTGNPTGTYQNGYDSTQQYGSNVANMHNGMNQQAYAYPLPQAAPMIGYPMPTGYSQ.

Residues 1-15 (MSSYSSDRDRGRDRG) show a composition bias toward basic and acidic residues. The tract at residues 1–39 (MSSYSSDRDRGRDRGFGAPRFGGSRTGPLSGKKFGNPGE) is disordered. Ser24 carries the phosphoserine modification. An N6-acetyllysine; alternate modification is found at Lys32. Lys32 participates in a covalent cross-link: Glycyl lysine isopeptide (Lys-Gly) (interchain with G-Cter in SUMO2); alternate. Lys33 and Lys40 each carry N6-acetyllysine. Lys45 participates in a covalent cross-link: Glycyl lysine isopeptide (Lys-Gly) (interchain with G-Cter in SUMO2). Lys53 is covalently cross-linked (Glycyl lysine isopeptide (Lys-Gly) (interchain with G-Cter in SUMO2); alternate). Residue Lys53 forms a Glycyl lysine isopeptide (Lys-Gly) (interchain with G-Cter in SUMO); alternate linkage. A Glycyl lysine isopeptide (Lys-Gly) (interchain with G-Cter in SUMO1); alternate cross-link involves residue Lys53. Positions 94 to 122 (LNFYEANFPANVMDVIARQNFTEPTAIQA) match the Q motif motif. Residues 114 to 116 (FTE), Gln121, and 138 to 145 (AQTGSGKT) contribute to the ATP site. Residues 125 to 300 (WPVALSGLDM…EDFLKDYIHI (176 aa)) enclose the Helicase ATP-binding domain. Lys236 carries the N6-acetyllysine modification. The short motif at 248-251 (DEAD) is the DEAD box element. Tyr297 bears the Phosphotyrosine mark. Residues 328–475 (KLIRLMEEIM…AINPKLLQLV (148 aa)) enclose the Helicase C-terminal domain. Glycyl lysine isopeptide (Lys-Gly) (interchain with G-Cter in SUMO2) cross-links involve residues Lys340, Lys343, Lys388, Lys391, Lys411, Lys437, Lys451, and Lys470. The disordered stretch occupies residues 477–504 (DRGSGRSRGRGGMKDDRRDRYSAGKRGG). A transactivation domain region spans residues 477–614 (DRGSGRSRGR…GYPMPTGYSQ (138 aa)). Phosphoserine is present on Ser480. Residues 488-498 (GMKDDRRDRYS) are compositionally biased toward basic and acidic residues. Lys523 participates in a covalent cross-link: Glycyl lysine isopeptide (Lys-Gly) (interchain with G-Cter in SUMO2).

This sequence belongs to the DEAD box helicase family. DDX5/DBP2 subfamily. Identified in the spliceosome C complex. Component of a ribonucleoprotein complex containing mRNAs and RNA-binding proteins including DDX5, HNRNPH2 and SRSF1 as well as splicing regulator ARVCF. Interacts with RBM4; the interaction occurs in an RNA-independent manner. Interacts with AGO1 and AGO2. Interacts with ESR1, AR, EP300, CREBBP, POLR2A, TP53, RUNX2 and HDAC1. Self-associates. Interacts with DDX17. Interacts with BRDT. The large PER complex involved in the repression of transcriptional termination is composed of at least PER2, CDK9, DDX5, DHX9, NCBP1 and POLR2A (active). Interacts with DHX36; this interaction occurs in a RNA-dependent manner. Interacts with NUPR1. Interacts with ERCC6. Interacts with DDX3X in the cytoplasm; this interaction may be more efficient when both proteins are unphosphorylated. Post-translationally, sumoylated; sumoylation, promoted by PIAS1, promotes interaction with HDAC1 and transcriptional repression activity. Sumoylation also significantly increases stability, and reduces polyubiquitination. In terms of processing, polyubiquitinated, leading to proteasomal degradation. Weakly phosphorylated in the G1/S phase of the cell cycle and much more at G2/M, especially at Thr and Tyr residues.

Its subcellular location is the nucleus. The protein resides in the nucleolus. It is found in the cytoplasm. The catalysed reaction is ATP + H2O = ADP + phosphate + H(+). Its function is as follows. Involved in the alternative regulation of pre-mRNA splicing; its RNA helicase activity is necessary for increasing tau exon 10 inclusion and occurs in a RBM4-dependent manner. Binds to the tau pre-mRNA in the stem-loop region downstream of exon 10. The rate of ATP hydrolysis is highly stimulated by single-stranded RNA. Involved in transcriptional regulation; the function is independent of the RNA helicase activity. Transcriptional coactivator for androgen receptor AR but probably not ESR1. Synergizes with DDX17 and SRA1 RNA to activate MYOD1 transcriptional activity and involved in skeletal muscle differentiation. Transcriptional coactivator for p53/TP53 and involved in p53/TP53 transcriptional response to DNA damage and p53/TP53-dependent apoptosis. Transcriptional coactivator for RUNX2 and involved in regulation of osteoblast differentiation. Acts as a transcriptional repressor in a promoter-specific manner; the function probably involves association with histone deacetylases, such as HDAC1. As component of a large PER complex is involved in the inhibition of 3' transcriptional termination of circadian target genes such as PER1 and NR1D1 and the control of the circadian rhythms. The protein is Probable ATP-dependent RNA helicase DDX5 (Ddx5) of Mus musculus (Mouse).